Here is a 306-residue protein sequence, read N- to C-terminus: Ornithine carbamoyltransferase (306 aa).

Carbamoyl phosphate contacts are provided by residues 53-56 (STRT), Q80, R104, and 131-134 (HPCQ). L-ornithine is bound by residues N162, D219, and 223–224 (SM). Residues 259 to 260 (CL) and R287 each bind carbamoyl phosphate.

It belongs to the aspartate/ornithine carbamoyltransferase superfamily. OTCase family.

It is found in the cytoplasm. The catalysed reaction is carbamoyl phosphate + L-ornithine = L-citrulline + phosphate + H(+). The protein operates within amino-acid biosynthesis; L-arginine biosynthesis; L-arginine from L-ornithine and carbamoyl phosphate: step 1/3. In terms of biological role, reversibly catalyzes the transfer of the carbamoyl group from carbamoyl phosphate (CP) to the N(epsilon) atom of ornithine (ORN) to produce L-citrulline. The chain is Ornithine carbamoyltransferase from Acinetobacter baumannii (strain ATCC 17978 / DSM 105126 / CIP 53.77 / LMG 1025 / NCDC KC755 / 5377).